A 121-amino-acid chain; its full sequence is Large ribosomal subunit protein uL18 (121 aa).

This sequence belongs to the universal ribosomal protein uL18 family. In terms of assembly, part of the 50S ribosomal subunit; part of the 5S rRNA/L5/L18/L25 subcomplex. Contacts the 5S and 23S rRNAs.

This is one of the proteins that bind and probably mediate the attachment of the 5S RNA into the large ribosomal subunit, where it forms part of the central protuberance. The chain is Large ribosomal subunit protein uL18 from Mesomycoplasma hyopneumoniae (strain 232) (Mycoplasma hyopneumoniae).